Reading from the N-terminus, the 576-residue chain is TRAF-type zinc finger domain-containing protein 1 (576 aa).

Ala2 carries the N-acetylalanine modification. The segment at 27 to 103 (IHEIHCQRNI…DLELSVVKLK (77 aa)) adopts a TRAF-type zinc-finger fold. Residues Ser278, Ser320, Ser326, Ser327, Ser409, Ser415, Ser430, and Ser450 each carry the phosphoserine modification. Residues 402–432 (EGIPTQDSQPEDRSPELSRRRVKHQGDLSSG) form a disordered region. Residues 411-420 (PEDRSPELSR) are compositionally biased toward basic and acidic residues. Disordered stretches follow at residues 465-491 (LNSS…GSQD) and 529-576 (HGSP…EEEE). Residue Ser531 is modified to Phosphoserine. Residues 540–552 (GSRSSRVTPTAAS) are compositionally biased toward polar residues.

In terms of assembly, interacts with MAVS, TICAM1, TRAF1, TRAF2, TRAF3 and TRAF6. In terms of tissue distribution, expressed in vascular smooth muscle cells.

Its function is as follows. Negative feedback regulator that controls excessive innate immune responses. Regulates both Toll-like receptor 4 (TLR4) and DDX58/RIG1-like helicases (RLH) pathways. May inhibit the LTR pathway by direct interaction with TRAF6 and attenuation of NF-kappa-B activation. May negatively regulate the RLH pathway downstream from MAVS and upstream of NF-kappa-B and IRF3. The chain is TRAF-type zinc finger domain-containing protein 1 (Trafd1) from Rattus norvegicus (Rat).